A 154-amino-acid polypeptide reads, in one-letter code: Ubiquitin-like protein 4A-A (154 aa).

One can recognise a Ubiquitin-like domain in the interval 1–76 (MILTVKPLQG…LNLVVRPAGE (76 aa)).

Component of the BAT3 complex.

The protein resides in the cytoplasm. Its subcellular location is the cytosol. Functionally, component of the BAT3 complex, a multiprotein complex involved in the post-translational delivery of tail-anchored (TA) membrane proteins to the endoplasmic reticulum membrane. TA membrane proteins, also named type II transmembrane proteins, contain a single C-terminal transmembrane region. In Oncorhynchus mykiss (Rainbow trout), this protein is Ubiquitin-like protein 4A-A (ubl4aa).